A 240-amino-acid polypeptide reads, in one-letter code: Triosephosphate isomerase (240 aa).

6 to 8 (NLK) is a substrate binding site. Histidine 88 functions as the Electrophile in the catalytic mechanism. Residue glutamate 157 is the Proton acceptor of the active site. The substrate site is built by glycine 163 and serine 193.

It belongs to the triosephosphate isomerase family. Homodimer.

The protein resides in the cytoplasm. The enzyme catalyses D-glyceraldehyde 3-phosphate = dihydroxyacetone phosphate. The protein operates within carbohydrate biosynthesis; gluconeogenesis. Its pathway is carbohydrate degradation; glycolysis; D-glyceraldehyde 3-phosphate from glycerone phosphate: step 1/1. In terms of biological role, involved in the gluconeogenesis. Catalyzes stereospecifically the conversion of dihydroxyacetone phosphate (DHAP) to D-glyceraldehyde-3-phosphate (G3P). This chain is Triosephosphate isomerase, found in Sulfurimonas denitrificans (strain ATCC 33889 / DSM 1251) (Thiomicrospira denitrificans (strain ATCC 33889 / DSM 1251)).